A 566-amino-acid chain; its full sequence is Protein kintoun (566 aa).

Disordered regions lie at residues 183 to 298 (KYKG…TAPQ), 399 to 467 (EEEE…AETG), and 493 to 552 (QLEE…ESRI). The span at 208–290 (PQQTTGPQQP…HQPTDPQQTT (83 aa)) shows a compositional bias: low complexity. Residues 399 to 424 (EEEERRAEEEESRKGGDEDGELHPDC) are compositionally biased toward basic and acidic residues. Low complexity predominate over residues 440-467 (TPAADTHTPAADTHTPAADTHTPAAETG). A compositionally biased stretch (basic and acidic residues) spans 535–550 (DPAHTDPAHTDPEMES).

Belongs to the PIH1 family. Kintoun subfamily.

It localises to the cytoplasm. The protein localises to the dynein axonemal particle. Its function is as follows. Required for cytoplasmic pre-assembly of axonemal dyneins, thereby playing a central role in motility in cilia and flagella. Involved in pre-assembly of dynein arm complexes in the cytoplasm before intraflagellar transport loads them for the ciliary compartment. This is Protein kintoun from Danio rerio (Zebrafish).